The primary structure comprises 470 residues: Sulfate adenylyltransferase subunit 1 (470 aa).

The region spanning 22–236 is the tr-type G domain; it reads KELLRFITCG…YLETIKIDYA (215 aa). The tract at residues 31-38 is G1; it reads GSVDDGKS. A GTP-binding site is contributed by 31–38; the sequence is GSVDDGKS. The tract at residues 89–93 is G2; the sequence is GITID. Residues 110–113 are G3; it reads DTPG. GTP contacts are provided by residues 110–114 and 165–168; these read DTPGH and NKMD. Residues 165–168 are G4; that stretch reads NKMD. The G5 stretch occupies residues 202–204; that stretch reads SAL.

Belongs to the TRAFAC class translation factor GTPase superfamily. Classic translation factor GTPase family. CysN/NodQ subfamily. Heterodimer composed of CysD, the smaller subunit, and CysN.

The catalysed reaction is sulfate + ATP + H(+) = adenosine 5'-phosphosulfate + diphosphate. It participates in sulfur metabolism; hydrogen sulfide biosynthesis; sulfite from sulfate: step 1/3. Functionally, with CysD forms the ATP sulfurylase (ATPS) that catalyzes the adenylation of sulfate producing adenosine 5'-phosphosulfate (APS) and diphosphate, the first enzymatic step in sulfur assimilation pathway. APS synthesis involves the formation of a high-energy phosphoric-sulfuric acid anhydride bond driven by GTP hydrolysis by CysN coupled to ATP hydrolysis by CysD. This Francisella tularensis subsp. novicida (strain U112) protein is Sulfate adenylyltransferase subunit 1.